The chain runs to 257 residues: MKLGVNIDHVAVLREARAVNDPQIIHAMFEAVSGGADQITIHLREDRRHINEDDVKNIINLSPIPVNLECSINSEIIDIVCELKPHRATIVPEKREELTTEGGLSLDSLNLKNVISKLNDNDIKVSLFINPKKNDVIMSKELGATCVELHTGAYANTFLMLNSNLNHTKYKIDNLNLKRGELEILLNSELTRIKEAANISTNLGLEVAAGHGLNYQNVTAISSIKDIFELNIGQSIVAKSVFVGLKNAVKEMMELVK.

Asparagine 6 is a 3-amino-2-oxopropyl phosphate binding site. 8–9 (DH) serves as a coordination point for 1-deoxy-D-xylulose 5-phosphate. Arginine 17 provides a ligand contact to 3-amino-2-oxopropyl phosphate. The active-site Proton acceptor is histidine 42. 1-deoxy-D-xylulose 5-phosphate is bound by residues arginine 44 and histidine 49. Glutamate 69 functions as the Proton acceptor in the catalytic mechanism. Residue threonine 99 participates in 1-deoxy-D-xylulose 5-phosphate binding. Histidine 211 functions as the Proton donor in the catalytic mechanism. Residues glycine 212 and 233–234 (GQ) each bind 3-amino-2-oxopropyl phosphate.

Belongs to the PNP synthase family. In terms of assembly, homooctamer; tetramer of dimers.

The protein localises to the cytoplasm. It catalyses the reaction 3-amino-2-oxopropyl phosphate + 1-deoxy-D-xylulose 5-phosphate = pyridoxine 5'-phosphate + phosphate + 2 H2O + H(+). Its pathway is cofactor biosynthesis; pyridoxine 5'-phosphate biosynthesis; pyridoxine 5'-phosphate from D-erythrose 4-phosphate: step 5/5. Its function is as follows. Catalyzes the complicated ring closure reaction between the two acyclic compounds 1-deoxy-D-xylulose-5-phosphate (DXP) and 3-amino-2-oxopropyl phosphate (1-amino-acetone-3-phosphate or AAP) to form pyridoxine 5'-phosphate (PNP) and inorganic phosphate. The sequence is that of Pyridoxine 5'-phosphate synthase from Campylobacter fetus subsp. fetus (strain 82-40).